Consider the following 182-residue polypeptide: Alpha-S2-casein (182 aa).

Residues 1 to 15 (MKFFIFTCLLAVALA) form the signal peptide. Serine 22, serine 23, and serine 24 each carry phosphoserine.

Belongs to the alpha-casein family. As to expression, mammary gland specific. Secreted in milk.

The protein localises to the secreted. In terms of biological role, important role in the capacity of milk to transport calcium phosphate. The chain is Alpha-S2-casein (CSN1S2) from Oryctolagus cuniculus (Rabbit).